Reading from the N-terminus, the 222-residue chain is Probable transaldolase (222 aa).

Lysine 83 acts as the Schiff-base intermediate with substrate in catalysis.

The protein belongs to the transaldolase family. Type 3B subfamily.

It localises to the cytoplasm. It carries out the reaction D-sedoheptulose 7-phosphate + D-glyceraldehyde 3-phosphate = D-erythrose 4-phosphate + beta-D-fructose 6-phosphate. The protein operates within carbohydrate degradation; pentose phosphate pathway; D-glyceraldehyde 3-phosphate and beta-D-fructose 6-phosphate from D-ribose 5-phosphate and D-xylulose 5-phosphate (non-oxidative stage): step 2/3. Functionally, transaldolase is important for the balance of metabolites in the pentose-phosphate pathway. In Nitrosopumilus maritimus (strain SCM1), this protein is Probable transaldolase.